A 562-amino-acid chain; its full sequence is MDDTKRPLYLPFAGPAILEAPLINKGSAFSEEERIFFNLEGLLPYVIETIEEQAARAYAQFSNFSNDLDKHIYLRNIQDTNETLFYRLVRNNITEMMPIIYTPTVGLACERFSKNYRRNRGLFISYSNKDRIDDILNNSTRHKVKVIVVTDGERILGLGDQGIGGMGIPIGKLSLYTSCGGISPAYTLPITLDVGTDNQELLDDPMYMGWRHRRIEGQDYADFVEAFMEAVHRRWPDVLIQFEDFAQRNAMPLLERYKDQYCCFNDDIQGTAAVTVGSLLAASKAANTQLSKQRVVFLGAGSAGCGIAEAIVAQMISEGISEAQARSQVFMVDRLGLLQDNTANLLPFQQKLAQSSATVSQWHIEGDSVSLLNVINNAKPTVLIGVSGSPGQFTEAVIRAMHLHCPRPIVFPLSNPTSRVEATPEDVLNWTNGQALVATGSPFEPVTIGDETFEIAQCNNSFIFPGIGLGVLACRAKRVSDEMLMASSRALAECSPLGTTRTGSLLPKLDDIQKVSKYIAFAVAKVAMAQGLALPLTDELLNKSIEKNFWEPKYRRYKRTSF.

The active-site Proton donor is the tyrosine 101. Residue arginine 154 participates in NAD(+) binding. Lysine 172 (proton acceptor) is an active-site residue. Positions 243, 244, and 267 each coordinate a divalent metal cation. Positions 267 and 415 each coordinate NAD(+).

This sequence belongs to the malic enzymes family. As to quaternary structure, homotetramer. It depends on Mg(2+) as a cofactor. Mn(2+) is required as a cofactor.

The enzyme catalyses (S)-malate + NAD(+) = pyruvate + CO2 + NADH. The catalysed reaction is oxaloacetate + H(+) = pyruvate + CO2. The sequence is that of NAD-dependent malic enzyme from Shewanella denitrificans (strain OS217 / ATCC BAA-1090 / DSM 15013).